The primary structure comprises 588 residues: Interferon-activable protein 208 (588 aa).

A Pyrin domain is found at 5-92; that stretch reads MVNYYKQIVL…VDILRKEMEK (88 aa). 2 disordered regions span residues 157–183 and 469–526; these read ATSTSQAEGEPLTPQRFPTTASSSLQT and EMQN…RRVN. Polar residues-rich tracts occupy residues 172–183 and 470–487; these read RFPTTASSSLQT and MQNPQSGLGTGLSDQPRL.

It belongs to the HIN-200 family.

The chain is Interferon-activable protein 208 from Mus musculus (Mouse).